We begin with the raw amino-acid sequence, 231 residues long: Small ribosomal subunit protein uS2 (231 aa).

The tract at residues 1 to 23 is disordered; that stretch reads MKVTNLSEKEERGGELTEAEKEE. Basic and acidic residues predominate over residues 7–23; it reads SEKEERGGELTEAEKEE.

Belongs to the universal ribosomal protein uS2 family.

This is Small ribosomal subunit protein uS2 (rps2) from Saccharolobus solfataricus (strain ATCC 35092 / DSM 1617 / JCM 11322 / P2) (Sulfolobus solfataricus).